Reading from the N-terminus, the 496-residue chain is Probable histidine ammonia-lyase (496 aa).

Residues 141–143 (ASG) constitute a cross-link (5-imidazolinone (Ala-Gly)). Serine 142 bears the 2,3-didehydroalanine (Ser) mark.

Belongs to the PAL/histidase family. Post-translationally, contains an active site 4-methylidene-imidazol-5-one (MIO), which is formed autocatalytically by cyclization and dehydration of residues Ala-Ser-Gly.

The protein localises to the cytoplasm. The enzyme catalyses L-histidine = trans-urocanate + NH4(+). Its pathway is amino-acid degradation; L-histidine degradation into L-glutamate; N-formimidoyl-L-glutamate from L-histidine: step 1/3. This chain is Probable histidine ammonia-lyase, found in Thermoplasma acidophilum (strain ATCC 25905 / DSM 1728 / JCM 9062 / NBRC 15155 / AMRC-C165).